Reading from the N-terminus, the 219-residue chain is Protein Cmaq_0360 (219 aa).

The region spanning 8 to 204 (EQGKFLVRLA…EKGPRGDVYE (197 aa)) is the AMMECR1 domain.

The sequence is that of Protein Cmaq_0360 from Caldivirga maquilingensis (strain ATCC 700844 / DSM 13496 / JCM 10307 / IC-167).